Here is a 309-residue protein sequence, read N- to C-terminus: Nudix hydrolase 14, chloroplastic (309 aa).

A chloroplast-targeting transit peptide spans 1 to 60 (MAGFTLLPSRLLAFPSRALPRRLHHHHAKLILRCKMSSSSSSLTQSITLPSQPNEPVLVS). The 154-residue stretch at 139–292 (ARGPAVAVLI…KVLMSIGLYE (154 aa)) folds into the Nudix hydrolase domain. The short motif at 179-200 (MLDDDKGDFVGTAVREVEEEIG) is the Nudix box element. Glutamate 194 and glutamate 198 together coordinate Mg(2+).

This sequence belongs to the Nudix hydrolase family. Homodimer. Mg(2+) serves as cofactor. It depends on Mn(2+) as a cofactor. In terms of tissue distribution, expressed in roots, leaves, stems and inflorescences.

Its subcellular location is the plastid. It is found in the chloroplast. It carries out the reaction ADP-sugar + H2O = AMP + alpha-D-aldose 1-phosphate.. In terms of biological role, mediates the hydrolysis of some nucleoside diphosphate derivatives. Can use ADP-glucose, ADP-mannose and ADP-ribose as substrates. Regulates the intracellular ADP-glucose levels linked to starch biosynthesis. This Arabidopsis thaliana (Mouse-ear cress) protein is Nudix hydrolase 14, chloroplastic (NUDT14).